The primary structure comprises 296 residues: Glycine N-acyltransferase (296 aa).

Lysine 16 is modified (N6-acetyllysine; alternate). At lysine 16 the chain carries N6-succinyllysine; alternate. At lysine 113 the chain carries N6-acetyllysine. N6-acetyllysine; alternate occurs at positions 127, 141, and 142. N6-succinyllysine; alternate is present on residues lysine 127, lysine 141, and lysine 142. 2 positions are modified to N6-acetyllysine: lysine 159 and lysine 167. At lysine 169 the chain carries N6-succinyllysine. N6-acetyllysine; alternate occurs at positions 183 and 256. An N6-succinyllysine; alternate mark is found at lysine 183 and lysine 256. N6-succinyllysine is present on lysine 267.

This sequence belongs to the glycine N-acyltransferase family.

The protein localises to the mitochondrion. The enzyme catalyses an acyl-CoA + glycine = an N-acylglycine + CoA + H(+). It carries out the reaction benzoyl-CoA + glycine = N-benzoylglycine + CoA + H(+). In terms of biological role, mitochondrial acyltransferase which transfers an acyl group to the N-terminus of glycine and glutamine, although much less efficiently. Can conjugate a multitude of substrates to form a variety of N-acylglycines, thereby detoxify xenobiotics, such as benzoic acid or salicylic acid, and endogenous organic acids, such as isovaleric acid. This Mus musculus (Mouse) protein is Glycine N-acyltransferase (Glyat).